We begin with the raw amino-acid sequence, 105 residues long: MILSTTPTLEGKTIREYRGIVVGEAILGANVFKDLFAGIRDIIGGRSGAYEKELARAREIAFDELKERAAALGANAVVGIDIDYEVVGQSGSMLMVSISGTAVLV.

It belongs to the UPF0145 family.

This chain is UPF0145 protein AHA_2580, found in Aeromonas hydrophila subsp. hydrophila (strain ATCC 7966 / DSM 30187 / BCRC 13018 / CCUG 14551 / JCM 1027 / KCTC 2358 / NCIMB 9240 / NCTC 8049).